Reading from the N-terminus, the 757-residue chain is Xaa-Pro dipeptidyl-peptidase (757 aa).

Catalysis depends on charge relay system residues Ser348, Asp468, and His498.

The protein belongs to the peptidase S15 family. As to quaternary structure, homodimer.

The protein localises to the cytoplasm. It catalyses the reaction Hydrolyzes Xaa-Pro-|- bonds to release unblocked, N-terminal dipeptides from substrates including Ala-Pro-|-p-nitroanilide and (sequentially) Tyr-Pro-|-Phe-Pro-|-Gly-Pro-|-Ile.. Removes N-terminal dipeptides sequentially from polypeptides having unsubstituted N-termini provided that the penultimate residue is proline. The protein is Xaa-Pro dipeptidyl-peptidase of Streptococcus pneumoniae (strain ATCC 700669 / Spain 23F-1).